Consider the following 365-residue polypeptide: Glutamate 5-kinase 1 (365 aa).

Lys-9 serves as a coordination point for ATP. Substrate is bound by residues Ser-49, Asp-136, and Asn-148. Residues 168 to 169 and 210 to 216 contribute to the ATP site; these read TD and TGGMKSK. The 78-residue stretch at 276–353 folds into the PUA domain; it reads SGKITVDEGA…DEFHHEEGIE (78 aa).

The protein belongs to the glutamate 5-kinase family.

It is found in the cytoplasm. It catalyses the reaction L-glutamate + ATP = L-glutamyl 5-phosphate + ADP. It participates in amino-acid biosynthesis; L-proline biosynthesis; L-glutamate 5-semialdehyde from L-glutamate: step 1/2. Catalyzes the transfer of a phosphate group to glutamate to form L-glutamate 5-phosphate. The polypeptide is Glutamate 5-kinase 1 (Bacillus licheniformis (strain ATCC 14580 / DSM 13 / JCM 2505 / CCUG 7422 / NBRC 12200 / NCIMB 9375 / NCTC 10341 / NRRL NRS-1264 / Gibson 46)).